A 465-amino-acid polypeptide reads, in one-letter code: Branched-chain amino acid permease BcaP (465 aa).

The next 12 membrane-spanning stretches (helical) occupy residues 28–48 (FLALGVGTIISTSIFTLPGQV), 56–76 (GVVFSYLLAALVAGFVALAYA), 88–110 (AYSWISVLFGEGFGWIAGWALLA), 149–169 (DGGIVDIISLLVILLSAIIVF), 181–201 (ILVVLKVAAVIAFIIVGITVI), 219–239 (FGGFSGIWSGVSMIFLAYIGF), 259–279 (GIIGSLLIAVVLFAAVTLVLV), 309–329 (VVTAIALAGMFIALLGMVLAG), 359–379 (VWTLAIVAIVIGAFFPFAFLA), 380–400 (QLISAGTLIAFMFVTLGIYSL), 416–436 (PFYPVLPALGFIGSLFVFWGL), and 438–458 (VQAKLYSGIWFLIGIAIYFAY).

Belongs to the amino acid-polyamine-organocation (APC) superfamily.

It localises to the cell membrane. Functionally, branched-chain amino acid transport system that specifically transports branched-chain amino acids (BCAAs) (isoleucine, leucine and valine) and, to a lesser extent, methionine. Important for CodY-mediated regulation, and required for optimal growth in media containing free amino acids as the only amino acid source. This chain is Branched-chain amino acid permease BcaP, found in Lactococcus lactis subsp. cremoris (strain MG1363).